The chain runs to 634 residues: CREB-regulated transcription coactivator 1 (634 aa).

Phosphoserine is present on residues Ser64 and Ser113. 4 disordered regions span residues 110–174 (RLGS…GSQD), 191–221 (TTSEADKNLSKQAWDTKKTGSRPKSCEVPGI), 258–331 (LPTP…TLSP), and 357–479 (QAGS…HTST). At Thr149 the chain carries Phosphothreonine. Ser151 is subject to Phosphoserine; by SIK1 and SIK2. A compositionally biased stretch (polar residues) spans 151–174 (SDSALHQSTMTPTQPESFSSGSQD). Thr161 carries the post-translational modification Phosphothreonine. Positions 194-208 (EADKNLSKQAWDTKK) are enriched in basic and acidic residues. The short motif at 242–258 (TGGSLPDLTNIHFPSPL) is the Nuclear export signal element. Polar residues-rich tracts occupy residues 271 to 283 (ALSSSSSTGNLAA), 296 to 305 (GMSTPGSSPQ), and 314 to 331 (LSLSTEARRQQASPTLSP). A compositionally biased stretch (pro residues) spans 362-397 (QPPPQPQPPPPPPPASQQPPPPPPPQAPVRLPPGGP). Over residues 446–479 (QYRTSAGSPANQSPTSPVSNQGFSPGSSPQHTST) the composition is skewed to polar residues.

Belongs to the TORC family. In terms of assembly, binds, as a tetramer, through its N-terminal region, with the bZIP domain of CREB1. 'Arg-314' in the bZIP domain of CREB1 is essential for this interaction. Interaction, via its C-terminal, with TAF4, enhances recruitment of TAF4 to CREB1. Interacts with 14-3-3 proteins, including YWHAE/14-3-3 epsilon. Interacts with calmodulin-dependent catalytic subunit PPP3CA/calcineurin A. (Microbial infection) Interacts with HTLV1 Tax. Phosphorylation/dephosphorylation states of Ser-151 are required for regulating transduction of CREB activity. TORCs are inactive when phosphorylated, and active when dephosphorylated at this site. This primary site of phosphorylation is mediated by SIKs (SIK1 and SIK2), is regulated by cAMP and calcium levels and is dependent on the phosphorylation of SIKs by LKB1. As to expression, highly expressed in adult and fetal brain. Located to specific regions such as the prefrontal cortex and cerebellum. Very low expression in other tissues such as heart, spleen, lung, skeletal muscle, salivary gland, ovary and kidney.

The protein localises to the cytoplasm. Its subcellular location is the nucleus. Transcriptional coactivator for CREB1 which activates transcription through both consensus and variant cAMP response element (CRE) sites. Acts as a coactivator, in the SIK/TORC signaling pathway, being active when dephosphorylated and acts independently of CREB1 'Ser-133' phosphorylation. Enhances the interaction of CREB1 with TAF4. Regulates the expression of specific CREB-activated genes such as the steroidogenic gene, StAR. Potent coactivator of PGC1alpha and inducer of mitochondrial biogenesis in muscle cells. In the hippocampus, involved in late-phase long-term potentiation (L-LTP) maintenance at the Schaffer collateral-CA1 synapses. May be required for dendritic growth of developing cortical neurons. In concert with SIK1, regulates the light-induced entrainment of the circadian clock. In response to light stimulus, coactivates the CREB-mediated transcription of PER1 which plays an important role in the photic entrainment of the circadian clock. In terms of biological role, (Microbial infection) Plays a role of coactivator for TAX activation of the human T-cell leukemia virus type 1 (HTLV-1) long terminal repeats (LTR). The sequence is that of CREB-regulated transcription coactivator 1 from Homo sapiens (Human).